The following is a 175-amino-acid chain: Alpha-crystallin B chain (175 aa).

At methionine 1 the chain carries N-acetylmethionine. Serine 19, serine 45, and serine 59 each carry phosphoserine. The 109-residue stretch at 56-164 (RAPSWIDTGL…PERTIPITRE (109 aa)) folds into the sHSP domain. Position 83 (histidine 83) interacts with Zn(2+). N6-acetyllysine is present on lysine 92. Zn(2+) is bound by residues histidine 104, glutamate 106, histidine 111, and histidine 119. Residues 145-175 (VNGPRKQVSGPERTIPITREEKPAVAAAPKK) are disordered. Lysine 166 carries the post-translational modification N6-acetyllysine.

This sequence belongs to the small heat shock protein (HSP20) family. In terms of assembly, heteromer composed of three CRYAA and one CRYAB subunits. Aggregates with homologous proteins, including the small heat shock protein HSPB1, to form large heteromeric complexes. Inter-subunit bridging via zinc ions enhances stability, which is crucial as there is no protein turn over in the lens. Interacts with HSPBAP1. Interacts with TTN/titin. Interacts with TMEM109; in the cellular response to DNA damage. Interacts with DES; binds rapidly during early stages of DES filament assembly and a reduced binding seen in the later stages. Interacts with TMED10; the interaction mediates the translocation from the cytoplasm into the ERGIC (endoplasmic reticulum-Golgi intermediate compartment) and thereby secretion. Interacts with ATP6V1A and with MTOR, forming a ternary complex. Abundantly expressed in the lens of the eye. Expressed in ventricular cardiomyocytes of the heart. Also expressed in skeletal muscle and the kidney.

It is found in the cytoplasm. The protein localises to the cytosol. It localises to the nucleus. Its subcellular location is the secreted. The protein resides in the lysosome. May contribute to the transparency and refractive index of the lens. Has chaperone-like activity, preventing aggregation of various proteins under a wide range of stress conditions. In lens epithelial cells, stabilizes the ATP6V1A protein, preventing its degradation by the proteasome. The chain is Alpha-crystallin B chain from Mus musculus (Mouse).